Consider the following 284-residue polypeptide: tRNA uridine(34) hydroxylase (284 aa).

In terms of domain architecture, Rhodanese spans 132–226 (DGRPVVMLDT…YFEEVGGAHY (95 aa)). C186 functions as the Cysteine persulfide intermediate in the catalytic mechanism.

It belongs to the TrhO family.

It carries out the reaction uridine(34) in tRNA + AH2 + O2 = 5-hydroxyuridine(34) in tRNA + A + H2O. In terms of biological role, catalyzes oxygen-dependent 5-hydroxyuridine (ho5U) modification at position 34 in tRNAs. The chain is tRNA uridine(34) hydroxylase from Burkholderia vietnamiensis (strain G4 / LMG 22486) (Burkholderia cepacia (strain R1808)).